The following is a 537-amino-acid chain: MTFSEILDRVGSMGPFQYLHVTLLALPILGIANHNLLQIFTATTPDHHCRPPPNASLEPWVLPLGPNGKPEKCLRFVHLPNASLPNDTQGATEPCLDGWIYNSTRDTIVTEWDLVCGSNKLKEMAQSVFMAGILVGGPVFGELSDRFGRKPILTWSYLLLAASGSSAAFSPSLTVYMIFRFLCGCSISGISLSTIILNVEWVPTSTRAISSTTIGYCYTIGQFILPGLAYAVPQWRWLQLSVSAAFFIFSLLSWWVPESIRWLVLSGKFSKALKTLQRVATFNGKKEEGEKLTVEELKFNLQKDITSAKVKYGLSDLFRVSILRRVTFCLSLAWFATGFAYYSLAMGVEEFGVNIYILQIIFGGVDIPAKFITILSISYLGRRITQGFLLILAGVAILALIFVSSEMQLLRTALAVFGKGCLSGSFSCLFLYTSELYPTVLRQTGMGISNIWARVGSMIAPLVKITGELQPFIPNVIFGTMTLLGGSAAFFLLETLNRPLPETIEDIQDWYQQTKKTKQEPEAEKASQTIPLKTGGP.

Residues 1–11 (MTFSEILDRVG) lie on the Cytoplasmic side of the membrane. S4 is modified (phosphoserine). The chain crosses the membrane as a helical span at residues 12-32 (SMGPFQYLHVTLLALPILGIA). Residues 33 to 123 (NHNLLQIFTA…LVCGSNKLKE (91 aa)) lie on the Extracellular side of the membrane. An N-linked (GlcNAc...) asparagine glycan is attached at N81. Residues 124–144 (MAQSVFMAGILVGGPVFGELS) form a helical membrane-spanning segment. The Cytoplasmic segment spans residues 145–150 (DRFGRK). The chain crosses the membrane as a helical span at residues 151–171 (PILTWSYLLLAASGSSAAFSP). Residues 172-176 (SLTVY) lie on the Extracellular side of the membrane. The chain crosses the membrane as a helical span at residues 177–197 (MIFRFLCGCSISGISLSTIIL). Residues 198 to 212 (NVEWVPTSTRAISST) lie on the Cytoplasmic side of the membrane. A helical membrane pass occupies residues 213–233 (TIGYCYTIGQFILPGLAYAVP). Residues 234–236 (QWR) are Extracellular-facing. The helical transmembrane segment at 237-257 (WLQLSVSAAFFIFSLLSWWVP) threads the bilayer. The Cytoplasmic segment spans residues 258-327 (ESIRWLVLSG…FRVSILRRVT (70 aa)). A helical membrane pass occupies residues 328–348 (FCLSLAWFATGFAYYSLAMGV). Residues 349-354 (EEFGVN) are Extracellular-facing. A helical membrane pass occupies residues 355 to 375 (IYILQIIFGGVDIPAKFITIL). At 376-383 (SISYLGRR) the chain is on the cytoplasmic side. The helical transmembrane segment at 384 to 404 (ITQGFLLILAGVAILALIFVS) threads the bilayer. Topologically, residues 405-411 (SEMQLLR) are extracellular. A helical transmembrane segment spans residues 412 to 432 (TALAVFGKGCLSGSFSCLFLY). The Cytoplasmic segment spans residues 433–471 (TSELYPTVLRQTGMGISNIWARVGSMIAPLVKITGELQP). Residues 472 to 492 (FIPNVIFGTMTLLGGSAAFFL) form a helical membrane-spanning segment. Residues 493 to 537 (LETLNRPLPETIEDIQDWYQQTKKTKQEPEAEKASQTIPLKTGGP) lie on the Extracellular side of the membrane. A disordered region spans residues 513–537 (QTKKTKQEPEAEKASQTIPLKTGGP).

Belongs to the major facilitator (TC 2.A.1) superfamily. Organic cation transporter (TC 2.A.1.19) family. As to expression, expressed mainly in kidney. In kidney, detected in almost all parts of the nephron, including macula densa cells. Expressed (at protein level) throughout the renal cortex. Widely distributed in the brain with no large regional differences. Expressed in the choroid plexus (CP, located in the ventricles of the brain). Expressed in developing bone. Weakly expressed in brain and eye.

The protein localises to the basolateral cell membrane. It catalyses the reaction estrone 3-sulfate(out) + glutarate(in) = estrone 3-sulfate(in) + glutarate(out). The enzyme catalyses estrone 3-sulfate(in) + 2-oxoglutarate(out) = estrone 3-sulfate(out) + 2-oxoglutarate(in). It carries out the reaction taurocholate(out) + glutarate(in) = taurocholate(in) + glutarate(out). The catalysed reaction is dehydroepiandrosterone 3-sulfate(out) + glutarate(in) = dehydroepiandrosterone 3-sulfate(in) + glutarate(out). It catalyses the reaction glutarate(in) + 2-oxoglutarate(out) = glutarate(out) + 2-oxoglutarate(in). The enzyme catalyses urate(in) + 2-oxoglutarate(out) = urate(out) + 2-oxoglutarate(in). It carries out the reaction prostaglandin F2alpha(out) + glutarate(in) = prostaglandin F2alpha(in) + glutarate(out). The catalysed reaction is prostaglandin F2alpha(out) + 2-oxoglutarate(in) = prostaglandin F2alpha(in) + 2-oxoglutarate(out). It catalyses the reaction (R)-carnitine(out) + 2-oxoglutarate(in) = (R)-carnitine(in) + 2-oxoglutarate(out). The enzyme catalyses glutarate(in) + (R)-carnitine(out) = glutarate(out) + (R)-carnitine(in). It carries out the reaction prostaglandin E2(out) + 2-oxoglutarate(in) = prostaglandin E2(in) + 2-oxoglutarate(out). The catalysed reaction is prostaglandin E2(out) + glutarate(in) = prostaglandin E2(in) + glutarate(out). It catalyses the reaction urate(in) + glutarate(out) = urate(out) + glutarate(in). The enzyme catalyses taurocholate(out) + 2-oxoglutarate(in) = taurocholate(in) + 2-oxoglutarate(out). It carries out the reaction dehydroepiandrosterone 3-sulfate(out) + 2-oxoglutarate(in) = dehydroepiandrosterone 3-sulfate(in) + 2-oxoglutarate(out). The catalysed reaction is kynurenate(out) + a dicarboxylate(in) = kynurenate(in) + a dicarboxylate(out). It catalyses the reaction (indol-3-yl)acetate(out) + a dicarboxylate(in) = (indol-3-yl)acetate(in) + a dicarboxylate(out). The enzyme catalyses indoxyl sulfate(out) + a dicarboxylate(in) = indoxyl sulfate(in) + a dicarboxylate(out). It carries out the reaction N-benzoylglycine(out) + a dicarboxylate(in) = N-benzoylglycine(in) + a dicarboxylate(out). The catalysed reaction is 3-carboxy-4-methyl-5-propyl-2-furanpropanoate(out) + a dicarboxylate(in) = 3-carboxy-4-methyl-5-propyl-2-furanpropanoate(in) + a dicarboxylate(out). It catalyses the reaction (6R)-L-erythro-5,6,7,8-tetrahydrobiopterin(out) + a dicarboxylate(in) = (6R)-L-erythro-5,6,7,8-tetrahydrobiopterin(in) + a dicarboxylate(out). The enzyme catalyses L-erythro-7,8-dihydrobiopterin(out) + a dicarboxylate(in) = L-erythro-7,8-dihydrobiopterin(in) + a dicarboxylate(out). It carries out the reaction L-sepiapterin(out) + a dicarboxylate(in) = L-sepiapterin(in) + a dicarboxylate(out). Its activity is regulated as follows. Expression inhibited by androgens such as testosterone. In terms of biological role, functions as an organic anion/dicarboxylate exchanger that couples organic anion uptake indirectly to the sodium gradient. Transports organic anions such as estrone 3-sulfate (E1S) and urate in exchange for dicarboxylates such as glutarate or ketoglutarate (2-oxoglutarate). Plays an important role in the excretion of endogenous and exogenous organic anions, especially from the kidney and the brain. E1S transport is pH- and chloride-dependent and may also involve E1S/cGMP exchange. Responsible for the transport of prostaglandin E2 (PGE2) and prostaglandin F2(alpha) (PGF2(alpha)) in the basolateral side of the renal tubule. Involved in the transport of neuroactive tryptophan metabolites kynurenate and xanthurenate. Functions as a biopterin transporters involved in the uptake and the secretion of coenzymes tetrahydrobiopterin (BH4), dihydrobiopterin (BH2) and sepiapterin to urine, thereby determining baseline levels of blood biopterins. May be involved in the basolateral transport of steviol, a metabolite of the popular sugar substitute stevioside. May participate in the detoxification/ renal excretion of drugs and xenobiotics, such as the histamine H(2)-receptor antagonists fexofenadine and cimetidine, the antibiotic benzylpenicillin (PCG), the anionic herbicide 2,4-dichloro-phenoxyacetate (2,4-D), the diagnostic agent p-aminohippurate (PAH), the antiviral acyclovir (ACV), and the mycotoxin ochratoxin (OTA), by transporting these exogenous organic anions across the cell membrane in exchange for dicarboxylates such as 2-oxoglutarate. May contribute to the release of cortisol in the adrenals. Involved in one of the detoxification systems on the choroid plexus (CP), removes substrates such as E1S or taurocholate (TC), PCG, 2,4-D and PAH, from the cerebrospinal fluid (CSF) to the blood for eventual excretion in urine and bile. Also contributes to the uptake of several other organic compounds such as the prostanoids prostaglandin E(2) and prostaglandin F(2-alpha), L-carnitine, and the therapeutic drugs allopurinol, 6-mercaptopurine (6-MP) and 5-fluorouracil (5-FU). Mediates the transport of PAH, PCG, and the statins pravastatin and pitavastatin, from the cerebrum into the blood circulation across the blood-brain barrier (BBB). Contributes to the renal uptake of potent uremic toxins (indoxyl sulfate (IS), indole acetate (IA), hippurate/N-benzoylglycine (HA) and 3-carboxy-4-methyl-5-propyl-2-furanpropionate (CMPF)), pravastatin, PCG, E1S and dehydroepiandrosterone sulfate (DHEAS), and is partly involved in the renal uptake of temocaprilat (an angiotensin-converting enzyme (ACE) inhibitor). In summary, plays a role in the efflux of drugs and xenobiotics, helping reduce their undesired toxicological effects on the body. In Mus musculus (Mouse), this protein is Organic anion transporter 3 (Slc22a8).